We begin with the raw amino-acid sequence, 273 residues long: DNA repair protein RecO (273 aa).

A disordered region spans residues Asn-250–Ser-273. The segment covering Gly-257–Ser-273 has biased composition (basic and acidic residues).

This sequence belongs to the RecO family.

Functionally, involved in DNA repair and RecF pathway recombination. The protein is DNA repair protein RecO of Desulfitobacterium hafniense (strain Y51).